Here is a 118-residue protein sequence, read N- to C-terminus: uncharacterized protein (118 aa).

This is an uncharacterized protein from Bacillus subtilis (strain 168).